A 1339-amino-acid chain; its full sequence is Receptor tyrosine-protein kinase erbB-3 (1339 aa).

Positions 1 to 19 (MRATGTLQVLCFLLSLARG) are cleaved as a signal peptide. Residues 20–643 (SEMGNSQAVC…EVLMSKPHLV (624 aa)) are Extracellular-facing. Asparagine 126 is a glycosylation site (N-linked (GlcNAc...) asparagine). 11 disulfide bridges follow: cysteine 186/cysteine 194, cysteine 190/cysteine 202, cysteine 210/cysteine 218, cysteine 214/cysteine 226, cysteine 227/cysteine 235, cysteine 231/cysteine 243, cysteine 246/cysteine 255, cysteine 259/cysteine 286, cysteine 290/cysteine 301, cysteine 305/cysteine 320, and cysteine 323/cysteine 327. Asparagine 250 carries N-linked (GlcNAc...) asparagine glycosylation. Residues asparagine 353, asparagine 408, asparagine 414, asparagine 437, and asparagine 469 are each glycosylated (N-linked (GlcNAc...) asparagine). Disulfide bonds link cysteine 500–cysteine 509, cysteine 504–cysteine 517, cysteine 520–cysteine 529, cysteine 533–cysteine 549, cysteine 552–cysteine 565, cysteine 556–cysteine 573, cysteine 576–cysteine 585, cysteine 589–cysteine 610, cysteine 613–cysteine 621, and cysteine 617–cysteine 629. N-linked (GlcNAc...) asparagine glycosylation occurs at asparagine 522. The N-linked (GlcNAc...) asparagine glycan is linked to asparagine 566. N-linked (GlcNAc...) asparagine glycosylation is present at asparagine 616. Residues 644–662 (IAVTVGLAVILMILGGSFL) traverse the membrane as a helical segment. Topologically, residues 663–1339 (YWRGRRIQNK…LFPKANAQRT (677 aa)) are cytoplasmic. Residue serine 684 is modified to Phosphoserine. The Protein kinase domain maps to 707–964 (LRKLKVLGSG…TFKELANEFT (258 aa)). ATP is bound by residues 713–721 (LGSGVFGTV), lysine 740, 786–788 (QYL), and 832–837 (DLALRN). Catalysis depends on aspartate 832, which acts as the Proton acceptor. Serine 980 bears the Phosphoserine mark. Residues 1023–1036 (SLGSALSLPTGTLT) are compositionally biased toward low complexity. 2 disordered regions span residues 1023–1052 (SLGSALSLPTGTLTRPRGSQSLLSPSSGYM) and 1078–1215 (PISL…GSLE). A compositionally biased stretch (polar residues) spans 1039–1052 (RGSQSLLSPSSGYM). Positions 1172–1184 (GTLSSVGLSSVLG) are enriched in low complexity. Positions 1185–1195 (TEEEDEDEEYE) are enriched in acidic residues.

The protein belongs to the protein kinase superfamily. Tyr protein kinase family. EGF receptor subfamily. In terms of assembly, monomer and homodimer. Heterodimer with each of the other ERBB receptors (Potential). Interacts with CSPG5, PA2G4, GRB7, MYOC and MUC1. Found in a ternary complex with NRG1 and ITGAV:ITGB3 or ITGA6:ITGB4. Autophosphorylated. Ligand-binding increases phosphorylation on tyrosine residues and promotes its association with the p85 subunit of phosphatidylinositol 3-kinase.

It localises to the membrane. It catalyses the reaction L-tyrosyl-[protein] + ATP = O-phospho-L-tyrosyl-[protein] + ADP + H(+). In terms of biological role, tyrosine-protein kinase that plays an essential role as cell surface receptor for neuregulins. Binds to neuregulin-1 (NRG1) and is activated by it; ligand-binding increases phosphorylation on tyrosine residues and promotes its association with the p85 subunit of phosphatidylinositol 3-kinase. May also be activated by CSPG5. Involved in the regulation of myeloid cell differentiation. This is Receptor tyrosine-protein kinase erbB-3 (Erbb3) from Rattus norvegicus (Rat).